The primary structure comprises 990 residues: Pro-apoptotic serine protease NMA111 (990 aa).

The interval 1-32 (MSVTNSNRKRSLSEVSEGSDPEAPAKTRNSYT) is disordered. A serine protease region spans residues 73 to 263 (VVSIHFSQVA…LPLDRILRAL (191 aa)). Residues His111, Asp142, and Ser225 each act as charge relay system in the active site. PDZ domains are found at residues 290-368 (RRLG…QRGG) and 758-843 (SILT…VREG).

It belongs to the peptidase S1C family.

The protein localises to the nucleus. In terms of biological role, nuclear serine protease which mediates apoptosis. This is Pro-apoptotic serine protease NMA111 (NMA111) from Vanderwaltozyma polyspora (strain ATCC 22028 / DSM 70294 / BCRC 21397 / CBS 2163 / NBRC 10782 / NRRL Y-8283 / UCD 57-17) (Kluyveromyces polysporus).